Consider the following 397-residue polypeptide: MNIHEYQGKEILASYGVRVQRGIVANNAVEAVAAAKQLTAETGTGWHVIKAQIHAGGRGKGGGVKLAKNLQQVEELAEQIIGMQLITPQTPPEGKKVNKVLVAEDVYYPGESETSEFYVSVLLNRGTGRNMIMYSTEGGMDIEEVAEHTPHLIFTEEIDPTVGLQGFQARRIAFNLGLSGNAFKEMVKFIDALYNAYIGSDASMFEINPVLKTSDNKILAVDAKVNIDDNALYRQPKYAEMRDIREENPIEVEAKEVGLNYVDLDGTVGCMVNGAGLAMATMDLIKYAGFEPANFLDVGGTADAKRVETAFRIILKDPNVKAILINIFGGIVRCDRVAQGVVDAYKNMGDAIKVPIIVRLQGTNAEIAKELIDNSGMPILSAVQFQEAADQVKAALS.

Residues 9-253 (KEILASYGVR…IREENPIEVE (245 aa)) form the ATP-grasp domain. ATP-binding positions include Lys50, 57 to 59 (GRG), Val106, and Glu116. 2 residues coordinate Mg(2+): Asn208 and Asp222. Residues Asn273 and 330–332 (GIV) contribute to the substrate site.

This sequence belongs to the succinate/malate CoA ligase beta subunit family. In terms of assembly, heterotetramer of two alpha and two beta subunits. The cofactor is Mg(2+).

It carries out the reaction succinate + ATP + CoA = succinyl-CoA + ADP + phosphate. The enzyme catalyses GTP + succinate + CoA = succinyl-CoA + GDP + phosphate. Its pathway is carbohydrate metabolism; tricarboxylic acid cycle; succinate from succinyl-CoA (ligase route): step 1/1. Functionally, succinyl-CoA synthetase functions in the citric acid cycle (TCA), coupling the hydrolysis of succinyl-CoA to the synthesis of either ATP or GTP and thus represents the only step of substrate-level phosphorylation in the TCA. The beta subunit provides nucleotide specificity of the enzyme and binds the substrate succinate, while the binding sites for coenzyme A and phosphate are found in the alpha subunit. The polypeptide is Succinate--CoA ligase [ADP-forming] subunit beta (Flavobacterium johnsoniae (strain ATCC 17061 / DSM 2064 / JCM 8514 / BCRC 14874 / CCUG 350202 / NBRC 14942 / NCIMB 11054 / UW101) (Cytophaga johnsonae)).